The sequence spans 131 residues: MSMTDPIADMLTRVRNAHHAEKADVRMPSSKLKRAIAAVLQEEGYIEGYREVGEEKKPVLEVTLRYHEGQPAIREIQRYSRPGLRVYRGRDELPRVRNGLGTAIISTSKGVMSDGQARAQGHGGEVLCWVF.

This sequence belongs to the universal ribosomal protein uS8 family. In terms of assembly, part of the 30S ribosomal subunit. Contacts proteins S5 and S12.

In terms of biological role, one of the primary rRNA binding proteins, it binds directly to 16S rRNA central domain where it helps coordinate assembly of the platform of the 30S subunit. This is Small ribosomal subunit protein uS8 from Halorhodospira halophila (strain DSM 244 / SL1) (Ectothiorhodospira halophila (strain DSM 244 / SL1)).